We begin with the raw amino-acid sequence, 101 residues long: Urease subunit beta (101 aa).

Belongs to the urease beta subunit family. As to quaternary structure, heterotrimer of UreA (gamma), UreB (beta) and UreC (alpha) subunits. Three heterotrimers associate to form the active enzyme.

It localises to the cytoplasm. It catalyses the reaction urea + 2 H2O + H(+) = hydrogencarbonate + 2 NH4(+). It participates in nitrogen metabolism; urea degradation; CO(2) and NH(3) from urea (urease route): step 1/1. The polypeptide is Urease subunit beta (Pseudomonas aeruginosa (strain LESB58)).